The following is a 501-amino-acid chain: uncharacterized protein (501 aa).

Helical transmembrane passes span 14–34 (AIFIIPFWILSIALWFSSGSV), 73–93 (FILFQIIPINILCFLPLLGYM), 111–131 (IFGIMMLITIPLFLIVSICIF), 197–217 (FIIATIVFSFSMLVIVLVLLI), 274–294 (ILLSIFQLFYIGSYFSLYYFG), 297–317 (FNLIPFFINLIILFISYYNLI), and 466–486 (FLVLIGLSGLFNILYLKRLIL).

The protein resides in the membrane. This is an uncharacterized protein from Dictyostelium discoideum (Social amoeba).